A 257-amino-acid polypeptide reads, in one-letter code: UPF0246 protein CV_1250 (257 aa).

Belongs to the UPF0246 family.

This Chromobacterium violaceum (strain ATCC 12472 / DSM 30191 / JCM 1249 / CCUG 213 / NBRC 12614 / NCIMB 9131 / NCTC 9757 / MK) protein is UPF0246 protein CV_1250.